The chain runs to 239 residues: MRAQPPPRTLLSLALALLFLSMSWAKRGCSSSSPKLLSQLKSQANITGNTASLLEPYILHQNLNTLTLRAACTEHPVAFPSEDMLRQLSKPDFLSTVHATLGRVWHQLGAFRQQFPKIQDFPELERARQNIQGIRNNVYCMARLLHPPLEIPEPTQADSGTSRPTTTAPGIFQIKIDSCRFLWGYHRFMGSVGRVFEEWGDGSRRSRRHSPLWAWLKGDHRIRPSRSSQSAMLRSLVPR.

The first 25 residues, 1–25, serve as a signal peptide directing secretion; sequence MRAQPPPRTLLSLALALLFLSMSWA. Disulfide bonds link C29/C140 and C72/C179. The propeptide occupies 209-239; sequence HSPLWAWLKGDHRIRPSRSSQSAMLRSLVPR.

It belongs to the LIF/OSM family. Post-translationally, propeptide processing is not important for receptor binding activity but may be important growth-inhibitory activity. In terms of tissue distribution, widely expressed. Expressed at higher levels in liver, skin and spleen.

It localises to the secreted. In terms of biological role, growth regulator. Inhibits the proliferation of a number of tumor cell lines. It regulates cytokine production, including IL-6, G-CSF and GM-CSF from endothelial cells. Uses only type II OSM receptor (heterodimers composed of OSMR and IL6ST). Involved in the maturation of fetal hepatocytes, thereby promoting liver development and regeneration. The polypeptide is Oncostatin-M (Osm) (Rattus norvegicus (Rat)).